A 227-amino-acid chain; its full sequence is Probable 2-phosphosulfolactate phosphatase (227 aa).

Belongs to the ComB family. Mg(2+) is required as a cofactor.

It catalyses the reaction (2R)-O-phospho-3-sulfolactate + H2O = (2R)-3-sulfolactate + phosphate. The protein is Probable 2-phosphosulfolactate phosphatase of Thermotoga petrophila (strain ATCC BAA-488 / DSM 13995 / JCM 10881 / RKU-1).